The chain runs to 538 residues: Phosphoenolpyruvate carboxykinase (ATP) (538 aa).

Substrate-binding residues include Arg-64, Tyr-205, and Lys-211. ATP contacts are provided by residues Lys-211, His-230, and 246–254 (GLSGTGKTT). Residues Lys-211 and His-230 each contribute to the Mn(2+) site. Asp-267 lines the Mn(2+) pocket. Residues Glu-295, Arg-331, 447-448 (RI), and Thr-453 each bind ATP. Residue Arg-331 coordinates substrate.

Belongs to the phosphoenolpyruvate carboxykinase (ATP) family. Monomer. Mn(2+) serves as cofactor.

The protein localises to the cytoplasm. It carries out the reaction oxaloacetate + ATP = phosphoenolpyruvate + ADP + CO2. It participates in carbohydrate biosynthesis; gluconeogenesis. In terms of biological role, involved in the gluconeogenesis. Catalyzes the conversion of oxaloacetate (OAA) to phosphoenolpyruvate (PEP) through direct phosphoryl transfer between the nucleoside triphosphate and OAA. The protein is Phosphoenolpyruvate carboxykinase (ATP) of Mannheimia succiniciproducens (strain KCTC 0769BP / MBEL55E).